A 270-amino-acid chain; its full sequence is MSDQQQPPVYKIALGIEYDGSKYYGWQRQNEVRSVQEKLEKALSQVANEPITVFCAGRTDAGVHGTGQVVHFETTALRKDAAWTLGVNANLPGDIAVRWVKAVPDDFHARFSATARRYRYIIYNHRLRPAVLSKGVTHFYEPLDAERMHRAAQCLLGENDFTSFRAVQCQSRTPWRNVMHINVTRHGPYVVVDIKANAFVHHMVRNIVGSLMEVGAHNQPESWIAELLAAKDRTLAAATAKAEGLYLVAVDYPDRYDLPKPPMGPLFLAD.

The Nucleophile role is filled by D60. Residues F107–F111 form an RNA binding region. Y118 is a substrate binding site. An interaction with tRNA region spans residues Q168–R172.

It belongs to the tRNA pseudouridine synthase TruA family. As to quaternary structure, homodimer.

The enzyme catalyses uridine(38/39/40) in tRNA = pseudouridine(38/39/40) in tRNA. Formation of pseudouridine at positions 38, 39 and 40 in the anticodon stem and loop of transfer RNAs. In Escherichia coli O9:H4 (strain HS), this protein is tRNA pseudouridine synthase A.